The following is a 491-amino-acid chain: uncharacterized protein (491 aa).

W99 serves as a coordination point for substrate. N137 contacts Ca(2+). H138 provides a ligand contact to substrate. Positions 177 and 190 each coordinate Ca(2+). R219 serves as a coordination point for substrate. Residues D221, H225, and E245 each contribute to the Ca(2+) site. D221 functions as the Nucleophile in the catalytic mechanism. K224–H225 is a binding site for substrate. Residue E245 is the Proton donor of the active site. 3 residues coordinate substrate: G249, H312, and R360.

Belongs to the glycosyl hydrolase 13 family. The cofactor is Ca(2+).

The protein resides in the cytoplasm. It localises to the nucleus. This is an uncharacterized protein from Schizosaccharomyces pombe (strain 972 / ATCC 24843) (Fission yeast).